Consider the following 397-residue polypeptide: Arginine biosynthesis bifunctional protein ArgJ (397 aa).

6 residues coordinate substrate: Thr-147, Lys-173, Thr-184, Glu-270, Asn-392, and Thr-397. Thr-184 serves as the catalytic Nucleophile.

The protein belongs to the ArgJ family. As to quaternary structure, heterotetramer of two alpha and two beta chains.

The protein localises to the cytoplasm. It catalyses the reaction N(2)-acetyl-L-ornithine + L-glutamate = N-acetyl-L-glutamate + L-ornithine. The catalysed reaction is L-glutamate + acetyl-CoA = N-acetyl-L-glutamate + CoA + H(+). It participates in amino-acid biosynthesis; L-arginine biosynthesis; L-ornithine and N-acetyl-L-glutamate from L-glutamate and N(2)-acetyl-L-ornithine (cyclic): step 1/1. It functions in the pathway amino-acid biosynthesis; L-arginine biosynthesis; N(2)-acetyl-L-ornithine from L-glutamate: step 1/4. Functionally, catalyzes two activities which are involved in the cyclic version of arginine biosynthesis: the synthesis of N-acetylglutamate from glutamate and acetyl-CoA as the acetyl donor, and of ornithine by transacetylation between N(2)-acetylornithine and glutamate. This chain is Arginine biosynthesis bifunctional protein ArgJ, found in Streptococcus thermophilus (strain CNRZ 1066).